We begin with the raw amino-acid sequence, 177 residues long: Putative 3-methyladenine DNA glycosylase (177 aa).

It belongs to the DNA glycosylase MPG family.

In Rickettsia felis (strain ATCC VR-1525 / URRWXCal2) (Rickettsia azadi), this protein is Putative 3-methyladenine DNA glycosylase.